The sequence spans 313 residues: uncharacterized protein (313 aa).

Residues 2–57 (KLERLLAMVVLLISKKQVQAAELAELFEVSVRTIYRDIETINRAGIPIVTSQGSGG) form the HTH deoR-type domain. A DNA-binding region (H-T-H motif) is located at residues 19-38 (VQAAELAELFEVSVRTIYRD). The WYL domain maps to 131 to 210 (HTEDQKTLRE…KDLAILHQTF (80 aa)).

The protein resides in the cytoplasm. This is an uncharacterized protein from Bacillus subtilis (strain 168).